Reading from the N-terminus, the 972-residue chain is Translation initiation factor IF-2 (972 aa).

Positions 48–63 are enriched in basic and acidic residues; sequence DHLRKSHGATDGDKRK. Disordered regions lie at residues 48–85 and 99–385; these read DHLR…KART and RDDV…QAPT. A compositionally biased stretch (low complexity) spans 105–114; it reads GAEQGQAQVA. Residues 121–181 are compositionally biased toward basic and acidic residues; the sequence is ELKRREEEAR…EEEAAAKRVA (61 aa). A compositionally biased stretch (low complexity) spans 182 to 205; it reads AEAAAAQQQAAAQQAAAAEQQEAA. The span at 212–263 shows a compositional bias: basic and acidic residues; sequence DEARAAAERAAQREAAKKAEDAAREAADKARAEQEEISKRRAAAEAEARAIR. Residues 279 to 288 show a composition bias toward pro residues; it reads PPKPVEPPKP. Positions 313–328 are enriched in low complexity; that stretch reads PAGAAAPATTAPAGAG. Positions 357-370 are enriched in gly residues; it reads SSGGVDRGWRGGPK. One can recognise a tr-type G domain in the interval 472-641; it reads PRPPVVTVMG…LLQAEVLELK (170 aa). Residues 481–488 are G1; that stretch reads GHVDHGKT. GTP is bound at residue 481–488; it reads GHVDHGKT. The tract at residues 506–510 is G2; sequence GITQH. Residues 527 to 530 are G3; sequence DTPG. GTP-binding positions include 527-531 and 581-584; these read DTPGH and NKID. The G4 stretch occupies residues 581-584; sequence NKID. The segment at 617 to 619 is G5; that stretch reads SAK.

The protein belongs to the TRAFAC class translation factor GTPase superfamily. Classic translation factor GTPase family. IF-2 subfamily.

The protein resides in the cytoplasm. Its function is as follows. One of the essential components for the initiation of protein synthesis. Protects formylmethionyl-tRNA from spontaneous hydrolysis and promotes its binding to the 30S ribosomal subunits. Also involved in the hydrolysis of GTP during the formation of the 70S ribosomal complex. The sequence is that of Translation initiation factor IF-2 from Burkholderia lata (strain ATCC 17760 / DSM 23089 / LMG 22485 / NCIMB 9086 / R18194 / 383).